The chain runs to 404 residues: DNA gyrase subunit B (404 aa).

The region spanning 321-404 is the Toprim domain; sequence SEIYIVEGDS…VIIMTDADVD (84 aa). Mg(2+) is bound by residues Glu-327, Asp-400, and Asp-402.

This sequence belongs to the type II topoisomerase GyrB family. Heterotetramer, composed of two GyrA and two GyrB chains. In the heterotetramer, GyrA contains the active site tyrosine that forms a transient covalent intermediate with DNA, while GyrB binds cofactors and catalyzes ATP hydrolysis. The cofactor is Mg(2+). Mn(2+) serves as cofactor. It depends on Ca(2+) as a cofactor.

The protein localises to the cytoplasm. It carries out the reaction ATP-dependent breakage, passage and rejoining of double-stranded DNA.. A type II topoisomerase that negatively supercoils closed circular double-stranded (ds) DNA in an ATP-dependent manner to modulate DNA topology and maintain chromosomes in an underwound state. Negative supercoiling favors strand separation, and DNA replication, transcription, recombination and repair, all of which involve strand separation. Also able to catalyze the interconversion of other topological isomers of dsDNA rings, including catenanes and knotted rings. Type II topoisomerases break and join 2 DNA strands simultaneously in an ATP-dependent manner. The chain is DNA gyrase subunit B (gyrB) from Bacillus mycoides.